A 166-amino-acid chain; its full sequence is Photosystem I assembly protein Ycf3 (166 aa).

3 TPR repeats span residues 35–68, 72–105, and 120–153; these read AFTY…EIDP, SYIL…NPSL, and GEQA…APTN.

Belongs to the Ycf3 family.

The protein resides in the plastid. It localises to the chloroplast thylakoid membrane. Essential for the assembly of the photosystem I (PSI) complex. May act as a chaperone-like factor to guide the assembly of the PSI subunits. The sequence is that of Photosystem I assembly protein Ycf3 from Oltmannsiellopsis viridis (Marine flagellate).